The chain runs to 627 residues: Pentatricopeptide repeat-containing protein At2g15630, mitochondrial (627 aa).

The N-terminal 29 residues, 1–29, are a transit peptide targeting the mitochondrion; sequence MRRFTVPCILRHRISILSGAGYSPAAARL. PPR repeat units follow at residues 154–188, 189–223, 224–258, 259–293, 294–324, 326–360, 361–395, 396–430, 431–465, 466–500, 501–535, 536–570, and 571–605; these read STIL…GFYP, KTET…EIKS, NVYT…GIKP, TIVT…GFQP, DMQT…IGLV, DSVS…GMVP, TFYT…GIVL, DSVT…GIQP, TQFT…GMKP, DLVM…SINP, DDVT…GIKP, DHIS…GFNP, and TLLT…GIVP.

Belongs to the PPR family. P subfamily.

Its subcellular location is the mitochondrion. This is Pentatricopeptide repeat-containing protein At2g15630, mitochondrial from Arabidopsis thaliana (Mouse-ear cress).